A 409-amino-acid chain; its full sequence is TAR DNA-binding protein 43 (409 aa).

2 RRM domains span residues 105-200 (SDLI…RCTE) and 191-262 (RKVF…TAEP). Disordered stretches follow at residues 260-302 (AEPK…NQGG) and 341-409 (SQQN…GWGM). Positions 261–274 (EPKHNNNRQLERGG) are enriched in basic and acidic residues. The segment covering 281–292 (FGNQGYPNSRPS) has biased composition (polar residues). Composition is skewed to low complexity over residues 341 to 387 (SQQN…PNAG) and 395 to 409 (GFSS…GWGM).

In terms of assembly, homodimer.

It localises to the nucleus. It is found in the cytoplasm. Its subcellular location is the stress granule. The protein localises to the mitochondrion. In terms of biological role, probably involved in transcriptional repression. May play a role in the maintenance of the circadian clock periodicity. The polypeptide is TAR DNA-binding protein 43 (tardbp) (Xenopus tropicalis (Western clawed frog)).